The primary structure comprises 650 residues: Peroxisomal biogenesis factor 8 (650 aa).

Residues 648–650 (AKL) carry the Microbody targeting signal motif.

Its subcellular location is the peroxisome matrix. Its function is as follows. Essential for peroxisome biogenesis. May play a role in triggering the protein import competence of individual peroxisomes. It may interact with PEX10. This is Peroxisomal biogenesis factor 8 (PEX8) from Pichia angusta (Yeast).